Consider the following 535-residue polypeptide: Signal transduction histidine-protein kinase AfsQ2 (535 aa).

The Cytoplasmic portion of the chain corresponds to 1-30; that stretch reads MTREHQGGTRGLAAARKGFWSGLRFTSLRL. Residues 31–52 traverse the membrane as a helical segment; the sequence is RLVLVFGLVALTAAVSASGIAY. The Extracellular portion of the chain corresponds to 53-198; the sequence is WLNREAVLTR…SLEPEAKDLN (146 aa). A helical membrane pass occupies residues 199 to 219; sequence SLAWSLGIATALALLGSALLA. Residues 220 to 535 are Cytoplasmic-facing; sequence QALATTVLKP…DRGKDAKGQV (316 aa). One can recognise an HAMP domain in the interval 224–276; that stretch reads TTVLKPVHRLGVAARRLGEGKLDTRLRVSGTDELADLSRTFNSAAENLEKRVA. One can recognise a Histidine kinase domain in the interval 291–510; that stretch reads DMSHELRTPL…VFTLRLPQDP (220 aa). His-294 is modified (phosphohistidine). The interval 493 to 535 is disordered; sequence ENAPEGGAVFTLRLPQDPSPPADEDGGPDEETEDRGKDAKGQV. Over residues 514-525 the composition is skewed to acidic residues; it reads ADEDGGPDEETE. Positions 526 to 535 are enriched in basic and acidic residues; sequence DRGKDAKGQV.

The protein localises to the cell membrane. It carries out the reaction ATP + protein L-histidine = ADP + protein N-phospho-L-histidine.. In terms of biological role, forms part of a two-component regulatory system AfsQ1/AfsQ2 involved in secondary metabolism. May activate AfsQ1 by phosphorylation. In Streptomyces coelicolor (strain ATCC BAA-471 / A3(2) / M145), this protein is Signal transduction histidine-protein kinase AfsQ2 (afsQ2).